A 546-amino-acid polypeptide reads, in one-letter code: Carotenoid 9,10(9',10')-cleavage dioxygenase (546 aa).

His226, His274, His340, and His530 together coordinate Fe cation.

Belongs to the carotenoid oxygenase family. Fe(2+) serves as cofactor. In vegetative and floral tissues.

The protein resides in the cytoplasm. It catalyses the reaction all-trans-zeaxanthin + 2 O2 = 4,9-dimethyldodeca-2,4,6,8,10-pentaenedial + 2 (3R)-hydroxy-beta-ionone. In terms of biological role, cleaves a variety of carotenoids symmetrically at both the 9-10 and 9'-10' double bonds. Catalyzes the formation of 4,9-dimethyldodeca-2,4,6,8,10-pentaene-1,12-dialdehyde and probably hydroxydihydro-beta-ionone from zeaxanthin. The protein is Carotenoid 9,10(9',10')-cleavage dioxygenase (CCD) of Crocus sativus (Saffron).